Reading from the N-terminus, the 478-residue chain is BTB/POZ domain-containing protein 17 (478 aa).

A signal peptide spans 1–28 (MPRRGYSKPGSWGSFWAMLTLVGLVTHA). 3 N-linked (GlcNAc...) asparagine glycosylation sites follow: N61, N100, and N195. One can recognise a BTB domain in the interval 63–132 (SDVVLRVQAA…LYCGELTVLL (70 aa)). Residues 169–269 (AVGWYHYAVG…IPPAQLFQLQ (101 aa)) enclose the BACK domain.

It is found in the secreted. This is BTB/POZ domain-containing protein 17 (BTBD17) from Homo sapiens (Human).